Consider the following 109-residue polypeptide: MKKTYRVKSDKDFQMIFSRGKNVANRKFVIYYLEKEQKHFRVGISVSKKLGNAVVRNAIKRKIRHVLLSQKTALQDYDFVVIARKGVEELNYQALEKNLIHVLKIAGLI.

It belongs to the RnpA family. As to quaternary structure, consists of a catalytic RNA component (M1 or rnpB) and a protein subunit.

It carries out the reaction Endonucleolytic cleavage of RNA, removing 5'-extranucleotides from tRNA precursor.. In terms of biological role, RNaseP catalyzes the removal of the 5'-leader sequence from pre-tRNA to produce the mature 5'-terminus. It can also cleave other RNA substrates such as 4.5S RNA. The protein component plays an auxiliary but essential role in vivo by binding to the 5'-leader sequence and broadening the substrate specificity of the ribozyme. The polypeptide is Ribonuclease P protein component (Streptococcus agalactiae serotype III (strain NEM316)).